Reading from the N-terminus, the 449-residue chain is 3-phosphoshikimate 1-carboxyvinyltransferase (449 aa).

The tract at residues 1 to 26 (MNHHLPSRPARSRQSQGLKGNLRVPG) is disordered. 3-phosphoshikimate is bound by residues lysine 28, serine 29, and arginine 33. Lysine 28 is a phosphoenolpyruvate binding site. The phosphoenolpyruvate site is built by glycine 100 and arginine 128. 3-phosphoshikimate contacts are provided by serine 174, glutamine 176, aspartate 327, and lysine 354. Residue glutamine 176 participates in phosphoenolpyruvate binding. Aspartate 327 (proton acceptor) is an active-site residue. 2 residues coordinate phosphoenolpyruvate: arginine 358 and arginine 403.

This sequence belongs to the EPSP synthase family. Monomer.

Its subcellular location is the cytoplasm. It catalyses the reaction 3-phosphoshikimate + phosphoenolpyruvate = 5-O-(1-carboxyvinyl)-3-phosphoshikimate + phosphate. The protein operates within metabolic intermediate biosynthesis; chorismate biosynthesis; chorismate from D-erythrose 4-phosphate and phosphoenolpyruvate: step 6/7. Functionally, catalyzes the transfer of the enolpyruvyl moiety of phosphoenolpyruvate (PEP) to the 5-hydroxyl of shikimate-3-phosphate (S3P) to produce enolpyruvyl shikimate-3-phosphate and inorganic phosphate. This chain is 3-phosphoshikimate 1-carboxyvinyltransferase, found in Chelativorans sp. (strain BNC1).